We begin with the raw amino-acid sequence, 148 residues long: Large ribosomal subunit protein bL9 (148 aa).

This sequence belongs to the bacterial ribosomal protein bL9 family.

Functionally, binds to the 23S rRNA. This Pseudomonas savastanoi pv. phaseolicola (strain 1448A / Race 6) (Pseudomonas syringae pv. phaseolicola (strain 1448A / Race 6)) protein is Large ribosomal subunit protein bL9.